The chain runs to 348 residues: Chloroacetanilide N-alkylformylase, oxygenase component (348 aa).

The Rieske domain maps to 7 to 108 (WYAVAWCDEV…ARERHKLIWA (102 aa)). The [2Fe-2S] cluster site is built by cysteine 47, histidine 49, cysteine 66, and histidine 69. Positions 159 and 164 each coordinate Fe cation. A substrate-binding site is contributed by histidine 250. Residue aspartate 293 participates in Fe cation binding.

The chloroacetanilide N-alkylformylase multicomponent enzyme system is composed of an oxygenase component (CndA) and an electron transfer component formed by a ferredoxin reductase (CndC1) and a ferredoxin (CndB1). In vitro, chloroacetanilide N-alkylformylase assays in which CndB1 is substituted for CndB2 demonstrate that the two enzymes possess nearly identical activities. It depends on [2Fe-2S] cluster as a cofactor.

It catalyses the reaction butachlor + 2 reduced [2Fe-2S]-[ferredoxin] + O2 + 2 H(+) = butyl formate + N-(2,6-diethylphenyl)-2-chloroacetamide + 2 oxidized [2Fe-2S]-[ferredoxin] + H2O. The enzyme catalyses alachlor + 2 reduced [2Fe-2S]-[ferredoxin] + O2 + 2 H(+) = methyl formate + N-(2,6-diethylphenyl)-2-chloroacetamide + 2 oxidized [2Fe-2S]-[ferredoxin] + H2O. The catalysed reaction is acetochlor + 2 reduced [2Fe-2S]-[ferredoxin] + O2 + 2 H(+) = N-(2-ethyl-6-methylphenyl)-2-chloroacetamide + ethyl formate + 2 oxidized [2Fe-2S]-[ferredoxin] + H2O. Activity enhanced by Fe(2+) and Mg(2+) ions. Divalent cations such as Ca(2+), Cr(2+), Co(2+), and Mn(2+) show moderate inhibition of the enzyme, whereas heavy metal ions such as Ag(+), Cu(2+), Pb(2+), Hg(2+), Ni(2+) and Zn(2+) severely inhibit the activity. In terms of biological role, component of the chloroacetanilide N-alkylformylase multicomponent enzyme system involved in the degradation of chloroacetanilide herbicides (N-alkoxyalkyl-N-chloroacetyl-substituted aniline derivatives). In vitro, catalyzes the N-dealkylation of butachlor, alachlor and acetochlor to yield 2-chloro-N-(2,6-diethylphenyl)acetamide (CDEPA) (for alachlor and butachlor) and 2-chloro-N-(2-methyl-6-ethylphenyl)acetamide (CMEPA) (for acetochlor). In Rhizorhabdus wittichii (strain DC-6 / KACC 16600) (Sphingomonas wittichii), this protein is Chloroacetanilide N-alkylformylase, oxygenase component.